The chain runs to 1045 residues: E3 ubiquitin-protein ligase Topors (1045 aa).

The interval 1 to 35 (MGSQPPLGSPLSREEGEAPPPAPASEGRRRSRRVR) is disordered. The segment at 1–195 (MGSQPPLGSP…RERNASVYSP (195 aa)) is E3 ubiquitin-protein ligase activity. Residues 51–374 (ELAASAPARP…MAAFDQHANY (324 aa)) are required for DNA-binding. Glycyl lysine isopeptide (Lys-Gly) (interchain with G-Cter in SUMO2) cross-links involve residues Lys-73, Lys-76, Lys-83, and Lys-88. The residue at position 98 (Ser-98) is a Phosphoserine. The RING-type zinc finger occupies 103–142 (CPICLDRFDNVSYLDRCLHKFCFRCVQEWSKNKAECPLCK). A Glycyl lysine isopeptide (Lys-Gly) (interchain with G-Cter in SUMO2) cross-link involves residue Lys-159. Ser-194 is modified (phosphoserine). Lys-249 is covalently cross-linked (Glycyl lysine isopeptide (Lys-Gly) (interchain with G-Cter in SUMO2)). Positions 437-574 (SLLNTSDSSD…STSLSSPRNL (138 aa)) are required for sumoylation and localization to discrete nuclear foci. Residues 437–654 (SLLNTSDSSD…RSRTRDSSWS (218 aa)) form an interaction with SUMO1 region. The disordered stretch occupies residues 442-475 (SDSSDEELVTGGATSQIQGVQTNDDLNNDSDDSS). Over residues 453 to 463 (GATSQIQGVQT) the composition is skewed to polar residues. Positions 456 to 731 (SQIQGVQTND…RRTLSRAHYS (276 aa)) are interaction with p53/TP53. An interaction with TOP1 region spans residues 456 to 882 (SQIQGVQTND…GKATDTTKHH (427 aa)). Ser-499 is modified (phosphoserine). Positions 511-692 (ETVKTQEQEQ…RSRNRDRYYL (182 aa)) are disordered. The segment covering 521 to 534 (SYSSGDSDVSRCSS) has biased composition (low complexity). Positions 539–565 (LGKDEQINKGHCDSSTRIKSKKEEKRS) are enriched in basic and acidic residues. Lys-560 participates in a covalent cross-link: Glycyl lysine isopeptide (Lys-Gly) (interchain with G-Cter in SUMO). Residues 566 to 578 (TSLSSPRNLNSSV) are compositionally biased toward polar residues. At Ser-585 the chain carries Phosphoserine. Composition is skewed to basic residues over residues 588 to 597 (NHRHRKRGRS), 613 to 630 (KNHR…KRSR), and 637 to 647 (PRGRRDKKRSR). A compositionally biased stretch (low complexity) spans 654-669 (SRRSQTLSLSSESTSR). Lys-701 is covalently cross-linked (Glycyl lysine isopeptide (Lys-Gly) (interchain with G-Cter in SUMO2)). The tract at residues 713–936 (RDGYESSYRR…DNSGPQDPLQ (224 aa)) is disordered. Position 718 is a phosphoserine; by PLK1 (Ser-718). Residues 721–730 (RRRTLSRAHY) are compositionally biased toward basic residues. Over residues 731–747 (SRQSSSPEFRVQSFSER) the composition is skewed to polar residues. Ser-734 carries the phosphoserine modification. Composition is skewed to basic and acidic residues over residues 755-766 (NHSERKYYYYER) and 816-825 (FASKAKDSHY). Glycyl lysine isopeptide (Lys-Gly) (interchain with G-Cter in SUMO2) cross-links involve residues Lys-819 and Lys-837. The segment covering 854–863 (KHKRRKRKTR) has biased composition (basic residues). The interaction with UBE2I stretch occupies residues 854–917 (KHKRRKRKTR…ITIDSDSDKD (64 aa)). Phosphoserine is present on residues Ser-864 and Ser-866. Positions 880–897 (KHHKKKKKKHKKKHKKHH) are enriched in basic residues. Phosphoserine occurs at positions 912, 914, and 1028. Residues 913-923 (DSDKDSEVKED) are compositionally biased toward basic and acidic residues.

In terms of assembly, interacts with PARK7/DJ-1. Interacts with TOP1. Interacts with p53/TP53; can both ubiquitinate and sumoylate p53/TP53. Interacts with the SUMO1 conjugating enzyme UBE2I. Interacts with SUMO1. Interacts with NKX3-1; polyubiquitinates NKX3-1 and induces its proteasomal degradation. Interacts with SIN3A; sumoylates SIN3A. Interacts with IKBKE; induced by DNA damage. Phosphorylation at Ser-98 regulates the E3 ubiquitin-protein ligase activity but not the SUMO1-protein ligase activity. Phosphorylation at Ser-718 increases the E3 ubiquitin-protein ligase activity versus the SUMO1-protein ligase activity resulting in increased p53/TP53 ubiquitination and degradation. In terms of processing, sumoylated. Expressed at highest levels in testis and at lower levels in adrenal gland, bone marrow, brain, colon, heart, kidney, liver, muscle, ovary, pancreas, placenta, prostate, skeletal muscle, skin, small intestine, spleen, stomach, testis, thymus, thyroid and uterus. Expressed in the alveolar epithelium of the lung. Expression is commonly decreased in colon adenocarcinomas and lung cancers.

Its subcellular location is the nucleus. It localises to the PML body. It carries out the reaction S-ubiquitinyl-[E2 ubiquitin-conjugating enzyme]-L-cysteine + [acceptor protein]-L-lysine = [E2 ubiquitin-conjugating enzyme]-L-cysteine + N(6)-ubiquitinyl-[acceptor protein]-L-lysine.. Functionally, functions as an E3 ubiquitin-protein ligase and as an E3 SUMO1-protein ligase. Probable tumor suppressor involved in cell growth, cell proliferation and apoptosis that regulates p53/TP53 stability through ubiquitin-dependent degradation. May regulate chromatin modification through sumoylation of several chromatin modification-associated proteins. May be involved in DNA damage-induced cell death through IKBKE sumoylation. This chain is E3 ubiquitin-protein ligase Topors (TOPORS), found in Homo sapiens (Human).